A 314-amino-acid chain; its full sequence is Malate dehydrogenase (314 aa).

Residues 13-18 and aspartate 37 each bind NAD(+); that span reads GGGQIG. Residues arginine 88 and arginine 94 each contribute to the substrate site. NAD(+) is bound by residues asparagine 101 and 124-126; that span reads VAN. Residues asparagine 126 and arginine 157 each contribute to the substrate site. Catalysis depends on histidine 181, which acts as the Proton acceptor.

Belongs to the LDH/MDH superfamily. MDH type 3 family.

The enzyme catalyses (S)-malate + NAD(+) = oxaloacetate + NADH + H(+). Functionally, catalyzes the reversible oxidation of malate to oxaloacetate. In Myxococcus xanthus, this protein is Malate dehydrogenase.